The following is a 344-amino-acid chain: Dihydroorotate dehydrogenase (quinone) (344 aa).

FMN is bound by residues 65–69 (AGLDK) and Thr89. Lys69 serves as a coordination point for substrate. 114 to 118 (NRMGF) serves as a coordination point for substrate. 2 residues coordinate FMN: Asn145 and Asn178. Asn178 serves as a coordination point for substrate. The active-site Nucleophile is the Ser181. Asn183 serves as a coordination point for substrate. FMN-binding residues include Lys223 and Thr251. Substrate is bound at residue 252-253 (NT). Residues Gly274, Gly303, and 324 to 325 (YT) contribute to the FMN site.

The protein belongs to the dihydroorotate dehydrogenase family. Type 2 subfamily. In terms of assembly, monomer. The cofactor is FMN.

The protein localises to the cell membrane. It catalyses the reaction (S)-dihydroorotate + a quinone = orotate + a quinol. Its pathway is pyrimidine metabolism; UMP biosynthesis via de novo pathway; orotate from (S)-dihydroorotate (quinone route): step 1/1. Functionally, catalyzes the conversion of dihydroorotate to orotate with quinone as electron acceptor. In Ralstonia nicotianae (strain ATCC BAA-1114 / GMI1000) (Ralstonia solanacearum), this protein is Dihydroorotate dehydrogenase (quinone).